A 321-amino-acid polypeptide reads, in one-letter code: Lipoyl synthase (321 aa).

[4Fe-4S] cluster-binding residues include Cys68, Cys73, Cys79, Cys94, Cys98, Cys101, and Ser308. A Radical SAM core domain is found at 80 to 297 (FNHGTATFMI…KEQALAMGFT (218 aa)).

This sequence belongs to the radical SAM superfamily. Lipoyl synthase family. [4Fe-4S] cluster is required as a cofactor.

It is found in the cytoplasm. It carries out the reaction [[Fe-S] cluster scaffold protein carrying a second [4Fe-4S](2+) cluster] + N(6)-octanoyl-L-lysyl-[protein] + 2 oxidized [2Fe-2S]-[ferredoxin] + 2 S-adenosyl-L-methionine + 4 H(+) = [[Fe-S] cluster scaffold protein] + N(6)-[(R)-dihydrolipoyl]-L-lysyl-[protein] + 4 Fe(3+) + 2 hydrogen sulfide + 2 5'-deoxyadenosine + 2 L-methionine + 2 reduced [2Fe-2S]-[ferredoxin]. It participates in protein modification; protein lipoylation via endogenous pathway; protein N(6)-(lipoyl)lysine from octanoyl-[acyl-carrier-protein]: step 2/2. Functionally, catalyzes the radical-mediated insertion of two sulfur atoms into the C-6 and C-8 positions of the octanoyl moiety bound to the lipoyl domains of lipoate-dependent enzymes, thereby converting the octanoylated domains into lipoylated derivatives. The sequence is that of Lipoyl synthase from Proteus mirabilis (strain HI4320).